The chain runs to 97 residues: Small ribosomal subunit protein bS20 (97 aa).

It belongs to the bacterial ribosomal protein bS20 family.

In terms of biological role, binds directly to 16S ribosomal RNA. The protein is Small ribosomal subunit protein bS20 of Prochlorococcus marinus (strain MIT 9312).